Reading from the N-terminus, the 76-residue chain is Large ribosomal subunit protein bL31 (76 aa).

The protein belongs to the bacterial ribosomal protein bL31 family. Type A subfamily. Part of the 50S ribosomal subunit.

Its function is as follows. Binds the 23S rRNA. The protein is Large ribosomal subunit protein bL31 of Gluconacetobacter diazotrophicus (strain ATCC 49037 / DSM 5601 / CCUG 37298 / CIP 103539 / LMG 7603 / PAl5).